Reading from the N-terminus, the 504-residue chain is Xanthotoxol synthase (504 aa).

The chain crosses the membrane as a helical span at residues 3–23 (PAAIFLILAIPIASVYLLFYH). The tract at residues 363–368 (PGPLLI) is substrate specificity. Position 444 (cysteine 444) interacts with heme.

This sequence belongs to the cytochrome P450 family. Requires heme as cofactor.

It localises to the microsome membrane. The catalysed reaction is psoralen + reduced [NADPH--hemoprotein reductase] + O2 = xanthotoxol + oxidized [NADPH--hemoprotein reductase] + H2O + H(+). It catalyses the reaction 6-methoxycoumarin + reduced [NADPH--hemoprotein reductase] + O2 = scopoletin + oxidized [NADPH--hemoprotein reductase] + H2O + H(+). It functions in the pathway secondary metabolite biosynthesis. Functionally, involved in the biosynthesis of coumarins and furanocoumarins (FCs), natural products required for defense responses against attacks by predators with potential medical and agroindustrial usages such as anticoagulant, rodenticide and artificial vanilla substitutes. Catalyzes the conversion of psoralen into xanthotoxol and of 6-methoxycoumarin into scopoletin. Can also convert with a lower efficiency scopoletin into fraxetin and 7-methoxycoumarin into daphnetin-7-methylether, and use 7-methoxy-3-methylcoumarin as substrate. The protein is Xanthotoxol synthase of Pastinaca sativa (Wild parsnip).